The following is a 425-amino-acid chain: Serine--tRNA ligase (425 aa).

232–234 (TSE) serves as a coordination point for L-serine. ATP contacts are provided by residues 263–265 (RRE) and valine 279. Position 286 (glutamate 286) interacts with L-serine. 350-353 (EVVS) serves as a coordination point for ATP. Threonine 387 is an L-serine binding site.

Belongs to the class-II aminoacyl-tRNA synthetase family. Type-1 seryl-tRNA synthetase subfamily. In terms of assembly, homodimer. The tRNA molecule binds across the dimer.

It localises to the cytoplasm. The catalysed reaction is tRNA(Ser) + L-serine + ATP = L-seryl-tRNA(Ser) + AMP + diphosphate + H(+). It catalyses the reaction tRNA(Sec) + L-serine + ATP = L-seryl-tRNA(Sec) + AMP + diphosphate + H(+). It participates in aminoacyl-tRNA biosynthesis; selenocysteinyl-tRNA(Sec) biosynthesis; L-seryl-tRNA(Sec) from L-serine and tRNA(Sec): step 1/1. Catalyzes the attachment of serine to tRNA(Ser). Is also able to aminoacylate tRNA(Sec) with serine, to form the misacylated tRNA L-seryl-tRNA(Sec), which will be further converted into selenocysteinyl-tRNA(Sec). The sequence is that of Serine--tRNA ligase from Methanocella arvoryzae (strain DSM 22066 / NBRC 105507 / MRE50).